We begin with the raw amino-acid sequence, 567 residues long: PHD finger protein 1 (567 aa).

The interval 1 to 31 (MAQPPRLSRSGASSLWDPASPAPTSGPRPRL) is disordered. The region spanning 29-86 (PRLWEGQDVLARWTDGLLYLGTIKKVDSAREVCLVQFEDDSQFLVLWKDISPAALPGE) is the Tudor domain. 2 consecutive PHD-type zinc fingers follow at residues 87–142 (ELLC…CVFA) and 186–240 (QSYC…CRGG). Disordered regions lie at residues 333–441 (ARMP…TDAR) and 455–537 (HPSA…GYLS). Glycine 360 is modified (phosphoserine). Residues 371–386 (PEPEPLRRRQKGKVEE) are compositionally biased toward basic and acidic residues. Serine 420 is subject to Phosphoserine. 3 stretches are compositionally biased toward low complexity: residues 423–433 (PNQSYQGSSGY), 456–470 (PSASTAGTSGDSGPP), and 488–510 (SAPHSMTASSSSVSSPSPGLPRR). The segment covering 524–534 (GTGGGVRGGVG) has biased composition (gly residues).

The protein belongs to the Polycomblike family. As to quaternary structure, interacts with CHMP1. Associated component of the PRC2 complex. Interacts with p53/TP53. Highest levels in heart, skeletal muscle, and pancreas, lower levels in brain, placenta, lung, liver and kidney.

It localises to the nucleus. Its subcellular location is the cytoplasm. The protein resides in the cytoskeleton. It is found in the microtubule organizing center. The protein localises to the centrosome. Its function is as follows. Polycomb group (PcG) that specifically binds histone H3 trimethylated at 'Lys-36' (H3K36me3) and recruits the PRC2 complex. Involved in DNA damage response and is recruited at double-strand breaks (DSBs). Acts by binding to H3K36me3, a mark for transcriptional activation, and recruiting the PRC2 complex: it is however unclear whether recruitment of the PRC2 complex to H3K36me3 leads to enhance or inhibit H3K27me3 methylation mediated by the PRC2 complex. According to some reports, PRC2 recruitment by PHF1 promotes H3K27me3 and subsequent gene silencing by inducing spreading of PRC2 and H3K27me3 into H3K36me3 loci. According to another report, PHF1 recruits the PRC2 complex at double-strand breaks (DSBs) and inhibits the activity of PRC2. Regulates p53/TP53 stability and prolonges its turnover: may act by specifically binding to a methylated from of p53/TP53. The protein is PHD finger protein 1 (PHF1) of Homo sapiens (Human).